The primary structure comprises 452 residues: Na(+)/H(+) antiporter NhaA (452 aa).

Transmembrane regions (helical) follow at residues 27–47, 67–87, 108–128, 137–157, 166–186, 194–214, 216–236, 314–334, 343–363, 381–401, and 414–434; these read FSGI…NSAL, FIGM…FFLM, AFPA…YTLF, GFGI…LLLG, VFLV…IAIF, LWLL…KMGV, SLFP…NCGI, PWSA…VAIS, GVLP…ILGL, WIDI…SIFI, and VAKI…YFFI.

It belongs to the NhaA Na(+)/H(+) (TC 2.A.33) antiporter family.

The protein resides in the cell inner membrane. The enzyme catalyses Na(+)(in) + 2 H(+)(out) = Na(+)(out) + 2 H(+)(in). Functionally, na(+)/H(+) antiporter that extrudes sodium in exchange for external protons. This Wolinella succinogenes (strain ATCC 29543 / DSM 1740 / CCUG 13145 / JCM 31913 / LMG 7466 / NCTC 11488 / FDC 602W) (Vibrio succinogenes) protein is Na(+)/H(+) antiporter NhaA.